Here is a 258-residue protein sequence, read N- to C-terminus: GTP cyclohydrolase FolE2 (258 aa).

It belongs to the GTP cyclohydrolase IV family.

It carries out the reaction GTP + H2O = 7,8-dihydroneopterin 3'-triphosphate + formate + H(+). It functions in the pathway cofactor biosynthesis; 7,8-dihydroneopterin triphosphate biosynthesis; 7,8-dihydroneopterin triphosphate from GTP: step 1/1. Converts GTP to 7,8-dihydroneopterin triphosphate. This is GTP cyclohydrolase FolE2 from Lawsonia intracellularis (strain PHE/MN1-00).